The primary structure comprises 167 residues: Lipoprotein signal peptidase (167 aa).

3 helical membrane passes run 12-32, 68-88, and 99-119; these read WLWLAVLAFVLDQASKLAVVK, WQRWFFAVLAFAICGLLIHWL, and GIAYSLIIGGALGNVFDRLVL. Catalysis depends on residues Asp124 and Asp142. Residues 137-157 form a helical membrane-spanning segment; sequence AFNLADSFIFIGAAMIVLDGF.

It belongs to the peptidase A8 family.

It localises to the cell inner membrane. It carries out the reaction Release of signal peptides from bacterial membrane prolipoproteins. Hydrolyzes -Xaa-Yaa-Zaa-|-(S,diacylglyceryl)Cys-, in which Xaa is hydrophobic (preferably Leu), and Yaa (Ala or Ser) and Zaa (Gly or Ala) have small, neutral side chains.. It participates in protein modification; lipoprotein biosynthesis (signal peptide cleavage). Its function is as follows. This protein specifically catalyzes the removal of signal peptides from prolipoproteins. The polypeptide is Lipoprotein signal peptidase (Aeromonas hydrophila subsp. hydrophila (strain ATCC 7966 / DSM 30187 / BCRC 13018 / CCUG 14551 / JCM 1027 / KCTC 2358 / NCIMB 9240 / NCTC 8049)).